The primary structure comprises 339 residues: Deubiquitinase and deneddylase Dub2 (339 aa).

The chain crosses the membrane as a helical span at residues 36 to 56; sequence IIIALFLIVISCGLILCAYTF. Active-site residues include His203, Asp220, and Cys282.

This sequence belongs to the peptidase C48 family.

Its subcellular location is the secreted. The protein localises to the host cell. It is found in the membrane. Effector proteins function to alter host cell physiology and promote bacterial survival in host tissues. This protease possesses deubiquitinating and deneddylating activities. This chain is Deubiquitinase and deneddylase Dub2 (cdu2), found in Chlamydia trachomatis serovar B (strain Jali20/OT).